Here is a 365-residue protein sequence, read N- to C-terminus: Ribosomal RNA large subunit methyltransferase M (365 aa).

S-adenosyl-L-methionine-binding positions include serine 194, 227–230 (CPGG), aspartate 246, aspartate 266, and aspartate 284. Catalysis depends on lysine 313, which acts as the Proton acceptor.

Belongs to the class I-like SAM-binding methyltransferase superfamily. RNA methyltransferase RlmE family. RlmM subfamily. As to quaternary structure, monomer.

The protein localises to the cytoplasm. The enzyme catalyses cytidine(2498) in 23S rRNA + S-adenosyl-L-methionine = 2'-O-methylcytidine(2498) in 23S rRNA + S-adenosyl-L-homocysteine + H(+). Its function is as follows. Catalyzes the 2'-O-methylation at nucleotide C2498 in 23S rRNA. The protein is Ribosomal RNA large subunit methyltransferase M of Pasteurella multocida (strain Pm70).